Reading from the N-terminus, the 556-residue chain is Dihydroxy-acid dehydratase (556 aa).

Cys47 contacts [2Fe-2S] cluster. Asp79 is a binding site for Mg(2+). Residue Cys120 coordinates [2Fe-2S] cluster. Mg(2+)-binding residues include Asp121 and Lys122. Lys122 carries the N6-carboxylysine modification. Cys192 contacts [2Fe-2S] cluster. Position 444 (Glu444) interacts with Mg(2+). Ser470 acts as the Proton acceptor in catalysis.

This sequence belongs to the IlvD/Edd family. Homodimer. [2Fe-2S] cluster is required as a cofactor. The cofactor is Mg(2+).

The enzyme catalyses (2R)-2,3-dihydroxy-3-methylbutanoate = 3-methyl-2-oxobutanoate + H2O. The catalysed reaction is (2R,3R)-2,3-dihydroxy-3-methylpentanoate = (S)-3-methyl-2-oxopentanoate + H2O. The protein operates within amino-acid biosynthesis; L-isoleucine biosynthesis; L-isoleucine from 2-oxobutanoate: step 3/4. It participates in amino-acid biosynthesis; L-valine biosynthesis; L-valine from pyruvate: step 3/4. Functions in the biosynthesis of branched-chain amino acids. Catalyzes the dehydration of (2R,3R)-2,3-dihydroxy-3-methylpentanoate (2,3-dihydroxy-3-methylvalerate) into 2-oxo-3-methylpentanoate (2-oxo-3-methylvalerate) and of (2R)-2,3-dihydroxy-3-methylbutanoate (2,3-dihydroxyisovalerate) into 2-oxo-3-methylbutanoate (2-oxoisovalerate), the penultimate precursor to L-isoleucine and L-valine, respectively. The sequence is that of Dihydroxy-acid dehydratase from Prochlorococcus marinus (strain NATL2A).